Consider the following 306-residue polypeptide: UDP-3-O-acyl-N-acetylglucosamine deacetylase (306 aa).

3 residues coordinate Zn(2+): His-79, His-238, and Asp-242. His-265 acts as the Proton donor in catalysis.

It belongs to the LpxC family. Zn(2+) serves as cofactor.

It catalyses the reaction a UDP-3-O-[(3R)-3-hydroxyacyl]-N-acetyl-alpha-D-glucosamine + H2O = a UDP-3-O-[(3R)-3-hydroxyacyl]-alpha-D-glucosamine + acetate. It participates in glycolipid biosynthesis; lipid IV(A) biosynthesis; lipid IV(A) from (3R)-3-hydroxytetradecanoyl-[acyl-carrier-protein] and UDP-N-acetyl-alpha-D-glucosamine: step 2/6. Functionally, catalyzes the hydrolysis of UDP-3-O-myristoyl-N-acetylglucosamine to form UDP-3-O-myristoylglucosamine and acetate, the committed step in lipid A biosynthesis. The polypeptide is UDP-3-O-acyl-N-acetylglucosamine deacetylase (Shewanella pealeana (strain ATCC 700345 / ANG-SQ1)).